Consider the following 61-residue polypeptide: Putative antitoxin VapB13 (61 aa).

The protein belongs to the UPF0165 family.

Its function is as follows. Possibly the antitoxin component of a type II toxin-antitoxin (TA) system. Its cognate toxin is VapC13 (Potential). The chain is Putative antitoxin VapB13 (vapB13) from Archaeoglobus fulgidus (strain ATCC 49558 / DSM 4304 / JCM 9628 / NBRC 100126 / VC-16).